We begin with the raw amino-acid sequence, 239 residues long: uncharacterized protein (239 aa).

Residues 129–155 (DSLDDEDDNMISSNDPTKSPEEHDTTT) are disordered. Position 160 is a phosphoserine (serine 160).

This is an uncharacterized protein from Schizosaccharomyces pombe (strain 972 / ATCC 24843) (Fission yeast).